We begin with the raw amino-acid sequence, 407 residues long: Obg-like ATPase homolog (407 aa).

The region spanning 46-301 (LKIGIVGMPN…LTPEEAAQEC (256 aa)) is the OBG-type G domain. ATP contacts are provided by residues 55-60 (NIGKST) and Met249. The region spanning 322–405 (NLIHYFTASE…EPGDIIFWKI (84 aa)) is the TGS domain.

The protein belongs to the TRAFAC class OBG-HflX-like GTPase superfamily. OBG GTPase family.

Its function is as follows. Hydrolyzes ATP, and can also hydrolyze GTP with lower efficiency. Has lower affinity for GTP. This is Obg-like ATPase homolog from Schizosaccharomyces pombe (strain 972 / ATCC 24843) (Fission yeast).